We begin with the raw amino-acid sequence, 377 residues long: Unsaturated glucuronyl hydrolase (377 aa).

D88 serves as the catalytic Nucleophile. D149 functions as the Proton donor in the catalytic mechanism.

It belongs to the glycosyl hydrolase 88 family. As to quaternary structure, monomer.

It localises to the cytoplasm. The enzyme catalyses beta-D-Delta(4)-GlcA-(1-&gt;4)-beta-D-Glc-(1-&gt;4)-alpha-L-Rha-(1-&gt;3)-D-Glc + H2O = beta-D-Glc-(1-&gt;4)-alpha-L-Rha-(1-&gt;3)-D-Glc + 5-dehydro-4-deoxy-D-glucuronate. With respect to regulation, partially inhibited by divalent metal ions such as calcium, copper, iron and mercury. Functionally, catalyzes the hydrolysis of oligosaccharides with unsaturated glucuronyl residues at the non-reducing terminal, to a sugar or an amino sugar, and an unsaturated D-glucuronic acid (GlcA), which is nonenzymatically converted immediately to alpha-keto acid. The sequence is that of Unsaturated glucuronyl hydrolase (ugl) from Bacillus sp. (strain GL1).